The following is a 180-amino-acid chain: Required for excision 1-B domain-containing protein (180 aa).

The segment at 1–23 (MITAEAASESTVPAVPGDTAATG) is disordered.

This is Required for excision 1-B domain-containing protein from Bos taurus (Bovine).